Here is a 922-residue protein sequence, read N- to C-terminus: Histidine kinase 5 (922 aa).

Coiled coils occupy residues 86–120 (MQDNAVRLLKEELKNLDRQREEAEAKELKIIEEYK) and 169–205 (KQKALSLEKMLEASTERERRLMEKLSESLKTMESQSA). Residues 373–614 (TMSHEIRSPL…TFTFILPYKV (242 aa)) form the Histidine kinase domain. His-376 carries the phosphohistidine; by autocatalysis modification. Disordered regions lie at residues 620 to 639 (YSDDQDEFSDMADQQSEPDD) and 728 to 773 (NGRC…TEVK). Residues 738–747 (SCSSSQASSE) show a composition bias toward low complexity. Residues 761-773 (SHREEEKAETEVK) show a composition bias toward basic and acidic residues. Residues 779-921 (KILLVEDNKI…KLRECLQQYL (143 aa)) form the Response regulatory domain. Residues Asp-785, Asp-828, and Cys-830 each coordinate Mg(2+). Asp-828 is modified (4-aspartylphosphate).

As to quaternary structure, interacts with AHP1, APH2, APH3, APH5 and APH6, but not with APH4. As to expression, present in light-grown but not in etiolated seedlings. Mostly expressed in roots flowers and siliques, and, to a lower extent, in stems and leaves, especially in guard cells.

The protein localises to the cell membrane. It localises to the cytoplasm. The enzyme catalyses ATP + protein L-histidine = ADP + protein N-phospho-L-histidine.. In terms of biological role, functions as a histidine kinase and transmits the stress signal to a downstream MAPK cascade. This protein undergoes an ATP-dependent autophosphorylation at a conserved histidine residue in the kinase core, and a phosphoryl group is then transferred to a conserved aspartate residue in the receiver domain. Negative regulator of the ETR1-dependent abscisic acid (ABA) and ethylene signaling pathway that inhibits the root elongation. Promotes stomatal closure. Regulates stomatal opening by integrating multiple signals via hydrogen peroxide H(2)O(2) homeostasis in guard cells in an ABA-independent manner. May contribute to basal defense mechanisms by closing stomata in the presence of bacterial pathogens. Regulates both hormone levels and ROS production in response to stress. Required for full immunity to bacterial pathogen and necrotrophic fungus. This is Histidine kinase 5 (AHK5) from Arabidopsis thaliana (Mouse-ear cress).